A 166-amino-acid polypeptide reads, in one-letter code: RNA pyrophosphohydrolase (166 aa).

Residues 6–149 (GFRPNVGIIL…KRDVYRKAMM (144 aa)) enclose the Nudix hydrolase domain. Residues 38–59 (GGIHFGETPEQALYRELREEVG) carry the Nudix box motif.

Belongs to the Nudix hydrolase family. RppH subfamily. The cofactor is a divalent metal cation.

Its function is as follows. Accelerates the degradation of transcripts by removing pyrophosphate from the 5'-end of triphosphorylated RNA, leading to a more labile monophosphorylated state that can stimulate subsequent ribonuclease cleavage. This is RNA pyrophosphohydrolase from Acinetobacter baylyi (strain ATCC 33305 / BD413 / ADP1).